A 129-amino-acid chain; its full sequence is 4-amino-4-deoxychorismate mutase (129 aa).

A Chorismate mutase domain is found at 16-107 (AAATDPLDAL…ETCRLEDEWI (92 aa)).

It catalyses the reaction 4-amino-4-deoxychorismate = 4-amino-4-deoxyprephenate. It functions in the pathway antibiotic biosynthesis. Involved in pristinamycin I biosynthesis. Probably catalyzes the conversion of 4-amino-4-deoxychorismate to 4-amino-4-deoxyprephenate. This chain is 4-amino-4-deoxychorismate mutase, found in Streptomyces pristinaespiralis.